The primary structure comprises 349 residues: Phosphoribosylformylglycinamidine cyclo-ligase (349 aa).

It belongs to the AIR synthase family.

The protein resides in the cytoplasm. It catalyses the reaction 2-formamido-N(1)-(5-O-phospho-beta-D-ribosyl)acetamidine + ATP = 5-amino-1-(5-phospho-beta-D-ribosyl)imidazole + ADP + phosphate + H(+). Its pathway is purine metabolism; IMP biosynthesis via de novo pathway; 5-amino-1-(5-phospho-D-ribosyl)imidazole from N(2)-formyl-N(1)-(5-phospho-D-ribosyl)glycinamide: step 2/2. The protein is Phosphoribosylformylglycinamidine cyclo-ligase of Methanococcus maripaludis (strain DSM 14266 / JCM 13030 / NBRC 101832 / S2 / LL).